Reading from the N-terminus, the 126-residue chain is Small ribosomal subunit protein uS13 (126 aa).

The interval 94 to 126 is disordered; the sequence is RGLPVHGQRTSTNARTRKGPRRAIAGKKKPGKK. The span at 108 to 126 shows a compositional bias: basic residues; the sequence is RTRKGPRRAIAGKKKPGKK.

The protein belongs to the universal ribosomal protein uS13 family. As to quaternary structure, part of the 30S ribosomal subunit. Forms a loose heterodimer with protein S19. Forms two bridges to the 50S subunit in the 70S ribosome.

Its function is as follows. Located at the top of the head of the 30S subunit, it contacts several helices of the 16S rRNA. In the 70S ribosome it contacts the 23S rRNA (bridge B1a) and protein L5 of the 50S subunit (bridge B1b), connecting the 2 subunits; these bridges are implicated in subunit movement. Contacts the tRNAs in the A and P-sites. The polypeptide is Small ribosomal subunit protein uS13 (Streptomyces avermitilis (strain ATCC 31267 / DSM 46492 / JCM 5070 / NBRC 14893 / NCIMB 12804 / NRRL 8165 / MA-4680)).